The chain runs to 506 residues: MTQAVMLQGTASDVGKSVLAAGLCRIFYQDGLRTAPFKSQNMALNSGITPDGKEMGRAQIFQAEAAGITPDVRMNPVLLKPTSDRQAQVVLMGKVATNMDAVSYHDYKPRLREQILAVYNSLAQEYDVIVLEGAGSPAEINLRDRDIVNMGMAEMAQCPVILVADIDRGGVFAAIYGTLALLHKQERDRVKGVIINKFRGDVALLYSGIEQIESLTGVPVLGVMPWLDVDLEDEDGVALQNDKYRGNAPRDITIAIVQLPHISNFTDFNALAAQPDVRIRYIRRPEALTDVDLVILPGSKNTLSDLAWLRESGMADAVLQTHRQGVPVMGICGGYQMLGDTIVDEVESGLGTQPGLGLLNTITRFAQDKTTTQVNATMSGELPGWLAAAAGLPVRGYEIHMGETVLQEGCCTAMTLQKNGCSVADGAVTADGLAFGTYLHGLFDSDAFTRAVVNGLRARKGLAPWETTFCYADHKARQFDLLAEAMRQHIDIDKIYTIMQQHQEPV.

The 198-residue stretch at 251 to 448 (DITIAIVQLP…LHGLFDSDAF (198 aa)) folds into the GATase cobBQ-type domain. Cys-332 functions as the Nucleophile in the catalytic mechanism. The active site involves His-440.

The protein belongs to the CobB/CobQ family. CobQ subfamily. In terms of assembly, homodimer.

The protein operates within cofactor biosynthesis; adenosylcobalamin biosynthesis. Functionally, catalyzes amidations at positions B, D, E, and G on adenosylcobyrinic A,C-diamide. NH(2) groups are provided by glutamine, and one molecule of ATP is hydrogenolyzed for each amidation. In Salmonella typhimurium (strain LT2 / SGSC1412 / ATCC 700720), this protein is Cobyric acid synthase (cbiP).